Reading from the N-terminus, the 444-residue chain is Citrate-proton symporter (444 aa).

Residues 1 to 41 are Cytoplasmic-facing; it reads MPTARCSMRASSTAPVRMMATAGGARIGAILRVTSGNFLEQ. The chain crosses the membrane as a helical span at residues 42 to 62; sequence FDFFLFGFYATYIAHTFFPAS. Residues 63 to 72 are Periplasmic-facing; the sequence is SEFASLMMTF. The chain crosses the membrane as a helical span at residues 73–93; it reads AVFGAGFLMRPIGAIVLGAYI. At 94 to 114 the chain is on the cytoplasmic side; it reads DKVGRRKGLIVTLSIMATGTF. Residues 115–135 form a helical membrane-spanning segment; the sequence is LIVLIPSYQTIGLWAPLLVLI. The Periplasmic portion of the chain corresponds to 136 to 137; it reads GR. The helical transmembrane segment at 138–158 threads the bilayer; it reads LLQGFSAGAELGGVSVYLAEI. Residues 159–177 are Cytoplasmic-facing; sequence ATPGRKGFYTSWQSGSQQV. Residues 178 to 198 traverse the membrane as a helical segment; it reads AIMVAAAMGFALNAVLEPSAI. Residue S199 is a topological domain, periplasmic. A helical membrane pass occupies residues 200 to 220; the sequence is DWGWRIPFLFGVLIVPFIFIL. The Cytoplasmic portion of the chain corresponds to 221–251; sequence RRKLEETQEFTARRHHLAMRQVFATLLANWQ. The helical transmembrane segment at 252–272 threads the bilayer; that stretch reads VVIAGMMMVAMTTTAFYLITV. The Periplasmic portion of the chain corresponds to 273–289; it reads YAPTFGKKVLMLSASDS. Residues 290-310 traverse the membrane as a helical segment; it reads LLVTLLVAISNFFWLPVGGAL. The Cytoplasmic portion of the chain corresponds to 311–318; sequence SDRFGRRS. Residues 319–339 traverse the membrane as a helical segment; sequence VLIAMTLLALATAWPALTMLA. Position 340 (N340) is a topological domain, periplasmic. A helical membrane pass occupies residues 341 to 361; it reads APSFLMMLSVLLWLSFIYGMY. At 362-379 the chain is on the cytoplasmic side; sequence NGAMIPALTEIMPAEVRV. A helical membrane pass occupies residues 380–400; it reads AGFSLAYSLATAVFGGFTPVI. Topologically, residues 401–411 are periplasmic; it reads STALIEYTGDK. The helical transmembrane segment at 412–432 threads the bilayer; it reads ASPGYWMSFAAICGLLATCYL. Over 433–444 the chain is Cytoplasmic; that stretch reads YRRSAVALQTAR.

Belongs to the major facilitator superfamily. Metabolite:H+ Symporter (MHS) family (TC 2.A.1.6) family.

Its subcellular location is the cell inner membrane. Its function is as follows. Uptake of citrate across the boundary membrane with the concomitant transport of protons into the cell (symport system). This Klebsiella pneumoniae protein is Citrate-proton symporter (citH).